We begin with the raw amino-acid sequence, 55 residues long: UPF0391 membrane protein Tbd_2772 (55 aa).

2 consecutive transmembrane segments (helical) span residues 1–21 and 28–48; these read MFGW…FGFA and AWIA…MLVM.

Belongs to the UPF0391 family.

It is found in the cell membrane. This chain is UPF0391 membrane protein Tbd_2772, found in Thiobacillus denitrificans (strain ATCC 25259 / T1).